Reading from the N-terminus, the 326-residue chain is ELMO domain-containing protein 1 (326 aa).

In terms of domain architecture, ELMO spans 133–306 (QHEEMLLKLW…KFRKRIIKQL (174 aa)).

Functionally, acts as a GTPase-activating protein (GAP) toward guanine nucleotide exchange factors like ARL2, ARL3, ARF1 and ARF6, but not for GTPases outside the Arf family. This Bos taurus (Bovine) protein is ELMO domain-containing protein 1 (ELMOD1).